The primary structure comprises 114 residues: Large ribosomal subunit protein uL18 (114 aa).

It belongs to the universal ribosomal protein uL18 family. In terms of assembly, part of the 50S ribosomal subunit; part of the 5S rRNA/L5/L18/L25 subcomplex. Contacts the 5S and 23S rRNAs.

Its function is as follows. This is one of the proteins that bind and probably mediate the attachment of the 5S RNA into the large ribosomal subunit, where it forms part of the central protuberance. The protein is Large ribosomal subunit protein uL18 of Parabacteroides distasonis (strain ATCC 8503 / DSM 20701 / CIP 104284 / JCM 5825 / NCTC 11152).